A 510-amino-acid chain; its full sequence is ATP synthase subunit alpha 1 (510 aa).

An ATP-binding site is contributed by 169-176 (GDRQTGKT).

Belongs to the ATPase alpha/beta chains family. F-type ATPases have 2 components, CF(1) - the catalytic core - and CF(0) - the membrane proton channel. CF(1) has five subunits: alpha(3), beta(3), gamma(1), delta(1), epsilon(1). CF(0) has three main subunits: a(1), b(2) and c(9-12). The alpha and beta chains form an alternating ring which encloses part of the gamma chain. CF(1) is attached to CF(0) by a central stalk formed by the gamma and epsilon chains, while a peripheral stalk is formed by the delta and b chains.

Its subcellular location is the cell inner membrane. It carries out the reaction ATP + H2O + 4 H(+)(in) = ADP + phosphate + 5 H(+)(out). Its function is as follows. Produces ATP from ADP in the presence of a proton gradient across the membrane. The alpha chain is a regulatory subunit. The polypeptide is ATP synthase subunit alpha 1 (Marinomonas sp. (strain MWYL1)).